Here is a 298-residue protein sequence, read N- to C-terminus: Tyrosine recombinase XerC (298 aa).

A Core-binding (CB) domain is found at 1 to 84 (MNHIQEAFLN…TLRTLYEYWM (84 aa)). One can recognise a Tyr recombinase domain in the interval 105–286 (YLPQFSLEEE…SNQQLRKVYL (182 aa)). Active-site residues include arginine 145, lysine 169, histidine 238, arginine 241, and histidine 264. The active-site O-(3'-phospho-DNA)-tyrosine intermediate is the tyrosine 273.

This sequence belongs to the 'phage' integrase family. XerC subfamily. As to quaternary structure, forms a cyclic heterotetrameric complex composed of two molecules of XerC and two molecules of XerD.

It is found in the cytoplasm. Site-specific tyrosine recombinase, which acts by catalyzing the cutting and rejoining of the recombining DNA molecules. The XerC-XerD complex is essential to convert dimers of the bacterial chromosome into monomers to permit their segregation at cell division. It also contributes to the segregational stability of plasmids. The sequence is that of Tyrosine recombinase XerC from Staphylococcus aureus.